The primary structure comprises 26 residues: 83 kDa hypersensitivity protein (26 aa).

The disordered stretch occupies residues 1–26 (FTPEDFISAPRRGEAIPDPKGELAVF). The segment covering 11 to 26 (RRGEAIPDPKGELAVF) has biased composition (basic and acidic residues).

The polypeptide is 83 kDa hypersensitivity protein (Trichophyton tonsurans (Scalp ringworm fungus)).